A 64-amino-acid chain; its full sequence is Large ribosomal subunit protein bL35 (64 aa).

The protein belongs to the bacterial ribosomal protein bL35 family.

The polypeptide is Large ribosomal subunit protein bL35 (Acidothermus cellulolyticus (strain ATCC 43068 / DSM 8971 / 11B)).